A 302-amino-acid chain; its full sequence is Transmembrane protein 191C (302 aa).

Disordered stretches follow at residues 1–21 (MAAT…GRQR) and 54–73 (LRRR…EAAR). Residues 5–160 (QELLLQLQKD…EKLQQDALQT (156 aa)) are a coiled coil. A helical transmembrane segment spans residues 238 to 258 (VLGALQVLLTLPLLFLGLSLL).

It belongs to the TMEM191 family.

The protein resides in the membrane. This is Transmembrane protein 191C from Homo sapiens (Human).